The sequence spans 79 residues: Sulfur carrier protein TusA (79 aa).

Cys17 acts as the Cysteine persulfide intermediate in catalysis.

This sequence belongs to the sulfur carrier protein TusA family.

It is found in the cytoplasm. Its function is as follows. Sulfur carrier protein which probably makes part of a sulfur-relay system. The chain is Sulfur carrier protein TusA from Haemophilus ducreyi (strain 35000HP / ATCC 700724).